A 480-amino-acid chain; its full sequence is MQSSYFKNGILPIINRFYTKQIHFVGIGGIGMCGLAMLLLAQGYCITGSDIAQNDMIRSLLKLGIKIFFGHRDSNINQEINIVVISSAIDINNPEVQQAKRLKIPVIHRVKILSELMRYKYGIAIAGTHGKTTTVSMLTNIYVEAGLDPTFVNGGIIRSQGVSARLGYGNDFIAESDESDKSFLRLCPVVAVITNIDTDHMNTYHQNFEYLQEVFIKFLDKLPMYGYAVVCIDDPVVRKILPRINRKIITYGFSKDATLCIVKYYQYREKSNFTILIKNNKELQVVLNTPGYHNALNAAASIAVAIEEGIRDTVILKSMSNFTGTNRRFEFLGNYPLNIINGRVGKVMVIDDYGHHPAELRSTIIAIRTGWSDHRLVMVFQPHRFTRTHELYDNFVRVLSTVDVLLMLDIYSAGEQPIMGINAQSLCDSILKYAKVQPIFVQNECFLLKFLMNLLRDKDLLLIQGAGTISEIVKALFIKR.

Position 127-133 (127-133 (GTHGKTT)) interacts with ATP.

It belongs to the MurCDEF family.

It is found in the cytoplasm. The enzyme catalyses UDP-N-acetyl-alpha-D-muramate + L-alanine + ATP = UDP-N-acetyl-alpha-D-muramoyl-L-alanine + ADP + phosphate + H(+). It functions in the pathway cell wall biogenesis; peptidoglycan biosynthesis. Cell wall formation. The sequence is that of UDP-N-acetylmuramate--L-alanine ligase from Blochmanniella floridana.